We begin with the raw amino-acid sequence, 753 residues long: ATPase family gene 2 protein homolog B (753 aa).

Methionine 1 bears the N-acetylmethionine mark. Residues 1–189 form a required for interaction with AFG2A and CINP region; it reads MAPDSDPFPE…PRTRVSLGGE (189 aa). A disordered region spans residues 171–203; sequence SPDPAGLVTPRTRVSLGGEPPSEAQPQPEVPLG. ATP contacts are provided by residues 241–248 and 505–512; these read GPPGVGKT and GPPGCAKT.

This sequence belongs to the AAA ATPase family. AFG2 subfamily. As to quaternary structure, part of the 55LCC heterohexameric ATPase complex composed at least of AIRIM, AFG2A, AFG2B and CINP. Associates with pre-60S ribosomal particles. Expressed in both neurons and glia during embryonic and adult stages of brain development.

The protein localises to the cytoplasm. Its subcellular location is the cytoskeleton. It localises to the spindle. It is found in the nucleus. It catalyses the reaction ATP + H2O = ADP + phosphate + H(+). Its activity is regulated as follows. In the context of 55LCC heterohexameric ATPase complex, the ATPase activity is stimulated by DNA binding and inhibited in presence of RNA. In terms of biological role, ATP-dependent chaperone part of the 55LCC heterohexameric ATPase complex which is chromatin-associated and promotes replisome proteostasis to maintain replication fork progression and genome stability. Required for replication fork progression, sister chromatid cohesion, and chromosome stability. The ATPase activity is specifically enhanced by replication fork DNA and is coupled to cysteine protease-dependent cleavage of replisome substrates in response to replication fork damage. Uses ATPase activity to process replisome substrates in S-phase, facilitating their proteolytic turnover from chromatin to ensure DNA replication and mitotic fidelity. Plays an essential role in the cytoplasmic maturation steps of pre-60S ribosomal particles by promoting the release of shuttling protein RSL24D1/RLP24 from the pre-ribosomal particles. This is ATPase family gene 2 protein homolog B from Homo sapiens (Human).